Here is a 169-residue protein sequence, read N- to C-terminus: Small ribosomal subunit protein uS5 (169 aa).

Residues 14–77 (LQEKVVEVRR…EDAKKNLIVV (64 aa)) form the S5 DRBM domain.

Belongs to the universal ribosomal protein uS5 family. Part of the 30S ribosomal subunit. Contacts proteins S4 and S8.

Its function is as follows. With S4 and S12 plays an important role in translational accuracy. Functionally, located at the back of the 30S subunit body where it stabilizes the conformation of the head with respect to the body. This is Small ribosomal subunit protein uS5 from Clostridioides difficile (strain 630) (Peptoclostridium difficile).